We begin with the raw amino-acid sequence, 421 residues long: Testin (421 aa).

The 108-residue stretch at 92-199 folds into the PET domain; sequence MILTNPVAAK…GDVKLPCEMD (108 aa). Residues 133-164 are disordered; sequence EKQPVAGSEGAQYRKKQLAKQLPAHDQDPSKC. Residues 155–164 are compositionally biased toward basic and acidic residues; it reads PAHDQDPSKC. 3 consecutive LIM zinc-binding domains span residues 234–297, 299–359, and 362–421; these read YSCY…CDSE, PRCA…NHAV, and QGCH…KMMS.

This sequence belongs to the prickle / espinas / testin family. As to quaternary structure, interacts via LIM domain 1 with ZYX. Interacts (via LIM domain 3) with ENAH and VASP. Interacts with ALKBH4, talin, actin, alpha-actinin, GRIP1 and PXN. Interacts (via LIM domain 2) with ACTL7A (via N-terminus). Heterodimer with ACTL7A; the heterodimer interacts with ENAH to form a heterotrimer.

Its subcellular location is the cytoplasm. It localises to the cell junction. It is found in the focal adhesion. Functionally, scaffold protein that may play a role in cell adhesion, cell spreading and in the reorganization of the actin cytoskeleton. Plays a role in the regulation of cell proliferation. May act as a tumor suppressor. This Saimiri boliviensis boliviensis (Bolivian squirrel monkey) protein is Testin (TES).